The primary structure comprises 342 residues: S-adenosylmethionine:tRNA ribosyltransferase-isomerase (342 aa).

Belongs to the QueA family. As to quaternary structure, monomer.

Its subcellular location is the cytoplasm. It carries out the reaction 7-aminomethyl-7-carbaguanosine(34) in tRNA + S-adenosyl-L-methionine = epoxyqueuosine(34) in tRNA + adenine + L-methionine + 2 H(+). Its pathway is tRNA modification; tRNA-queuosine biosynthesis. Functionally, transfers and isomerizes the ribose moiety from AdoMet to the 7-aminomethyl group of 7-deazaguanine (preQ1-tRNA) to give epoxyqueuosine (oQ-tRNA). This is S-adenosylmethionine:tRNA ribosyltransferase-isomerase from Streptococcus pneumoniae (strain ATCC BAA-255 / R6).